We begin with the raw amino-acid sequence, 260 residues long: Pyridoxine 5'-phosphate synthase (260 aa).

A 3-amino-2-oxopropyl phosphate-binding site is contributed by Asn-15. 17-18 (DH) is a binding site for 1-deoxy-D-xylulose 5-phosphate. Arg-26 contributes to the 3-amino-2-oxopropyl phosphate binding site. The active-site Proton acceptor is the His-51. 2 residues coordinate 1-deoxy-D-xylulose 5-phosphate: Arg-53 and His-58. Glu-78 (proton acceptor) is an active-site residue. A 1-deoxy-D-xylulose 5-phosphate-binding site is contributed by Thr-108. Residue His-199 is the Proton donor of the active site. 3-amino-2-oxopropyl phosphate contacts are provided by residues Gly-200 and 221–222 (GH).

The protein belongs to the PNP synthase family. As to quaternary structure, homooctamer; tetramer of dimers.

It is found in the cytoplasm. The catalysed reaction is 3-amino-2-oxopropyl phosphate + 1-deoxy-D-xylulose 5-phosphate = pyridoxine 5'-phosphate + phosphate + 2 H2O + H(+). The protein operates within cofactor biosynthesis; pyridoxine 5'-phosphate biosynthesis; pyridoxine 5'-phosphate from D-erythrose 4-phosphate: step 5/5. In terms of biological role, catalyzes the complicated ring closure reaction between the two acyclic compounds 1-deoxy-D-xylulose-5-phosphate (DXP) and 3-amino-2-oxopropyl phosphate (1-amino-acetone-3-phosphate or AAP) to form pyridoxine 5'-phosphate (PNP) and inorganic phosphate. The polypeptide is Pyridoxine 5'-phosphate synthase (Cupriavidus taiwanensis (strain DSM 17343 / BCRC 17206 / CCUG 44338 / CIP 107171 / LMG 19424 / R1) (Ralstonia taiwanensis (strain LMG 19424))).